Reading from the N-terminus, the 138-residue chain is Iron sulfur cluster assembly protein 1 (138 aa).

It belongs to the NifU family. In terms of assembly, component of the core Fe-S cluster (ISC) assembly machinery. It depends on [2Fe-2S] cluster as a cofactor.

The protein resides in the cytoplasm. The protein operates within cofactor biosynthesis; iron-sulfur cluster biosynthesis. Its function is as follows. Scaffold protein for the de novo synthesis of iron-sulfur (Fe-S) clusters within mitosomes, which is required for maturation of both [2Fe-2S] and [4Fe-4S] proteins. First, a [2Fe-2S] cluster is transiently assembled on the scaffold protein ISU1. In a second step, the cluster is released from ISU1, transferred to a glutaredoxin, followed by the formation of [2Fe-2S] proteins, the synthesis of [4Fe-4S] clusters and their target-specific insertion into the recipient apoproteins. Cluster assembly on ISU1 depends on the function of the cysteine desulfurase complex NFS1-ISD11, which serves as the sulfur donor for cluster synthesis, the iron-binding protein frataxin as the putative iron donor, and the electron transfer chain comprised of ferredoxin reductase and ferredoxin, which receive their electrons from NADH. The polypeptide is Iron sulfur cluster assembly protein 1 (ISU1) (Trachipleistophora hominis (Microsporidian parasite)).